A 995-amino-acid chain; its full sequence is Protein translocase subunit SecA (995 aa).

Residues glutamine 86, 104 to 108, and aspartate 535 each bind ATP; that span reads GEGKT. The tract at residues 883–911 is disordered; it reads AQTVSSDGNGEVVRKPQRRSTPQIGRNEL. Zn(2+)-binding residues include cysteine 912, cysteine 914, cysteine 923, and histidine 924. Residues 939 to 995 are disordered; it reads PSAPPASKALKSTPATQTAVAEEAAKIQAAINSGKLPPTQTTPRGRQAPSVPRGKKR. Residues 957–969 are compositionally biased toward low complexity; that stretch reads AVAEEAAKIQAAI.

The protein belongs to the SecA family. In terms of assembly, monomer and homodimer. Part of the essential Sec protein translocation apparatus which comprises SecA, SecYEG and auxiliary proteins SecDF. Other proteins may also be involved. The cofactor is Zn(2+).

It localises to the cell membrane. It is found in the cytoplasm. It carries out the reaction ATP + H2O + cellular proteinSide 1 = ADP + phosphate + cellular proteinSide 2.. In terms of biological role, part of the Sec protein translocase complex. Interacts with the SecYEG preprotein conducting channel. Has a central role in coupling the hydrolysis of ATP to the transfer of proteins into and across the cell membrane, serving as an ATP-driven molecular motor driving the stepwise translocation of polypeptide chains across the membrane. In Chloroflexus aurantiacus (strain ATCC 29366 / DSM 635 / J-10-fl), this protein is Protein translocase subunit SecA.